The chain runs to 1352 residues: Alpha-protein kinase 1 (1352 aa).

The 121-residue stretch at 7-127 (DPNYGLLRSL…RWTSSLSTSD (121 aa)) folds into the Arf-GAP domain. Residues 25–48 (CAECNSANVPYVCIKLGVFICPTC) form a C4-type zinc finger. Disordered stretches follow at residues 123–164 (LSTS…NNNN), 219–380 (TQSQ…PQHH), 424–445 (QQQQ…NSEP), 457–484 (HNHH…GNNS), 503–560 (FVEE…GGVS), and 619–658 (IINN…TNQN). Residues 237–246 (GFSPFNSPRS) show a composition bias toward polar residues. Low complexity-rich tracts occupy residues 268 to 287 (NNSN…NNGN) and 298 to 318 (NNNN…NNNN). Polar residues-rich tracts occupy residues 329-352 (KTFS…SGNS) and 359-379 (HPTQ…SPQH). Positions 393-429 (TTQQQLQQQQLQLQQQLQQQLQQQQQQQQQQQQQQQS) form a coiled coil. Basic residues-rich tracts occupy residues 458-470 (NHHH…HHKQ) and 510-523 (HQHP…RHHS). Positions 619–636 (IINNQNNQNNNNNNNTNN) are enriched in low complexity. The stretch at 689-781 (YIQQQQQQQQ…QQQQQQHINL (93 aa)) forms a coiled coil. Disordered regions lie at residues 786-863 (PLQS…TDED) and 901-979 (TSPI…PDAR). Over residues 799–812 (PQHSSSQYMNQQGY) the composition is skewed to polar residues. Positions 821-859 (QPQSPQQIQPQPLQQQIFQQVQQQQPQIPQQSPQPLQSS) are enriched in low complexity. The segment covering 906–915 (QQPPQPPQPV) has biased composition (pro residues). Low complexity predominate over residues 931-965 (QQQNGPTVPQQQQQQQQQQQQQQQQQQQQQQQQQP). One can recognise an Alpha-type protein kinase domain in the interval 990-1194 (RFDAKLGKWV…ICHYLGLSSV (205 aa)). 1164–1169 (GKGNLG) lines the ATP pocket. Disordered stretches follow at residues 1198–1234 (PAND…SFNF) and 1279–1352 (QQQQ…KLVS). A coiled-coil region spans residues 1241-1320 (HVLEQLNQQQ…QQQQQQQQNG (80 aa)). Residues 1279 to 1319 (QQQQQQQQQQQQQQQQNQQQNQQQNQQQQQQQQQQQQQQQN) are compositionally biased toward low complexity. Positions 1321 to 1332 (HPPPQTPLPPTP) are enriched in pro residues. Residues 1334 to 1352 (QKDKPKIEVFGDILRKLVS) are compositionally biased toward basic and acidic residues.

The protein belongs to the protein kinase superfamily. Alpha-type protein kinase family. ALPK subfamily.

The polypeptide is Alpha-protein kinase 1 (ak1) (Dictyostelium discoideum (Social amoeba)).